The sequence spans 744 residues: 5-methyltetrahydropteroyltriglutamate--homocysteine methyltransferase (744 aa).

5-methyltetrahydropteroyltri-L-glutamate-binding positions include 17-20 (REVK) and Lys110. Residues 422-424 (IGS) and Glu475 each bind L-homocysteine. L-methionine-binding positions include 422–424 (IGS) and Glu475. Residue Trp552 participates in 5-methyltetrahydropteroyltri-L-glutamate binding. Asp590 is an L-homocysteine binding site. Asp590 provides a ligand contact to L-methionine. Glu596 provides a ligand contact to 5-methyltetrahydropteroyltri-L-glutamate. The Zn(2+) site is built by His632, Cys634, and Glu656. Residue His685 is the Proton donor of the active site. Cys717 serves as a coordination point for Zn(2+).

This sequence belongs to the vitamin-B12 independent methionine synthase family. The cofactor is Zn(2+).

The catalysed reaction is 5-methyltetrahydropteroyltri-L-glutamate + L-homocysteine = tetrahydropteroyltri-L-glutamate + L-methionine. It functions in the pathway amino-acid biosynthesis; L-methionine biosynthesis via de novo pathway; L-methionine from L-homocysteine (MetE route): step 1/1. In terms of biological role, catalyzes the transfer of a methyl group from 5-methyltetrahydrofolate to homocysteine resulting in methionine formation. The protein is 5-methyltetrahydropteroyltriglutamate--homocysteine methyltransferase of Trichodesmium erythraeum (strain IMS101).